The sequence spans 4836 residues: E3 ubiquitin-protein ligase HERC2 (4836 aa).

A disordered region spans residues 58 to 90 (LPLRKDDGVDAQSGTKKEDLNDKEKKEEEETPA). The span at 72–85 (TKKEDLNDKEKKEE) shows a compositional bias: basic and acidic residues. Thr-273 is subject to Phosphothreonine. One copy of the RCC1 1-1 repeat lies at 416–462 (PTSHKGSLQEVIGWGLIGWKYYANVIGPIQCEGLASLGVMQVACAEK). One copy of the RCC1 1-2 repeat lies at 463–513 (RFLILSRNGRVYTQAYNSDMLAPQLVQGLASRNIVKIAAHSDGHHYLALAA). Residues 514-569 (TGEVYSWGCGDGGRLGHGDTVPLEEPKVISAFSGKQAGKHVVHIACGSTYSAAITA) form an RCC1 1-3 repeat. The stretch at 570–621 (EGELYTWGRGNYGRLGHGSSEDEAIPMLVAGLKGLKVIDVACGSGDAQTLAV) is one RCC1 1-4 repeat. One copy of the RCC1 1-5 repeat lies at 624-675 (NGQVWSWGDGDYGKLGRGGSDGCKTPKLIEKLQDLDVIKVRCGSQFSIALTK). Phosphothreonine is present on Thr-648. The RCC1 1-6 repeat unit spans residues 676-727 (DGQVYSWGKGDNQRLGHGTEEHVRYPKLLEGLQGKKVIDVAAGSTHCLALTE). The stretch at 729–779 (SEVHSWGSNDQCQHFDTLRVTKPEPTALPGLDSKHIVGIACGPAQSFAWSS) is one RCC1 1-7 repeat. A coiled-coil region spans residues 948 to 981 (ALNAAITAEIQDIEAKKEAQKEKEIDEQEASAST). Residues 1208–1284 (VTLIRKADLE…MHAFCVGQYL (77 aa)) form the Cytochrome b5 heme-binding domain. Ser-1578 carries the phosphoserine modification. The region spanning 1860–1933 (SGPELAAMMK…KYDLKLVELP (74 aa)) is the MIB/HERC2 domain. Residue Ser-1943 is modified to Phosphoserine. Thr-1945 carries the post-translational modification Phosphothreonine. Positions 2351-2376 (GTGTLQTDDGAAASPDLGDMSPEGPQ) are disordered. Ser-2455 bears the Phosphoserine mark. One can recognise a CPH domain in the interval 2555–2631 (RADFLSNDDY…RYIHVELIGY (77 aa)). The ZZ-type zinc-finger motif lies at 2704-2756 (HPGVTCDGCQTFPINGSRFKCRNCDDFDFCETCFKTKKHNTRHTFGRINEPGQ). Positions 2709, 2712, 2724, 2727, 2733, 2736, 2742, and 2746 each coordinate Zn(2+). The DOC domain maps to 2760-2937 (FCGRSGKQLK…ASDNEEEEDD (178 aa)). The tract at residues 2928–2947 (ASDNEEEEDDKGSTGSLIRK) is disordered. Ser-2929 bears the Phosphoserine mark. The RCC1 2-1 repeat unit spans residues 2959–3010 (RTKVFVWGLNDKDQLGGLKGSKIKVPSFSETLSALNVVQVAGGSKSLFAVTV). An RCC1 2-2 repeat occupies 3011–3065 (EGKVYSCGEATNGRLGLGMSSGTVPIPRQITALSSYVVKKVAVHSGGRHATALTV). Residues 3066-3117 (DGKVFSWGEGDDGKLGHFSRMNCDKPRLIEALKTKRIRDIACGSSHSAALTS) form an RCC1 2-3 repeat. Residues 3119–3169 (GELYTWGLGEYGRLGHGDNTTQLKPKMVKVLLGHRVIQVACGSRDAQTLAL) form an RCC1 2-4 repeat. One copy of the RCC1 2-5 repeat lies at 3172-3223 (EGLVFSWGDGDFGKLGRGGSEGCNIPQNIERLNGQGVCQIECGAQFSLALTK). An RCC1 2-6 repeat occupies 3225–3275 (GVVWTWGKGDYFRLGHGSDVHVRKPQVVEGLRGKKIVHVAVGALHCLAVTD). The RCC1 2-7 repeat unit spans residues 3276–3327 (SGQVYAWGDNDHGQQGNGTTTVNRKPTLVQGLEGQKITRVACGSSHSVAWTT). Disordered regions lie at residues 3479-3499 (DAVT…RPFI), 3517-3537 (KTKE…QSLD), and 3604-3632 (SQSG…SGTV). Low complexity predominate over residues 3480–3495 (AVTPSAVTPSAPSASS). 2 stretches are compositionally biased toward polar residues: residues 3604–3613 (SQSGRLSSQP) and 3620–3631 (HPYTDDTSTSGT). One copy of the RCC1 3-1 repeat lies at 3953-4004 (SGTIYGWGHNHRGQLGGIEGAKVKVPTPCEALATLRPVQLIGGEQTLFAVTA). One copy of the RCC1 3-2 repeat lies at 4006–4058 (GKLYATGYGAGGRLGIGGTESVSTPTLLESIQHVFIKKVAVNSGGKHCLALSS). One copy of the RCC1 3-3 repeat lies at 4060–4110 (GEVYSWGEAEDGKLGHGNRSPCDRPRVIESLRGIEVVDVAAGGAHSACVTA). The stretch at 4112–4164 (GDLYTWGKGRYGRLGHSDSEDQLKPKLVEALQGHRVIDIACGSGDAQTLCLTD) is one RCC1 3-4 repeat. Residues 4166–4216 (DTVWSWGDGDYGKLGRGGSDGCKVPMKIDSLTGLGVVKVECGSQFSVALTK) form an RCC1 3-5 repeat. Residues 4218–4268 (GAVYTWGKGDYHRLGHGSDDHVRRPRQVQGLQGKKVIAIATGSLHCVCCTE) form an RCC1 3-6 repeat. One copy of the RCC1 3-7 repeat lies at 4270–4320 (GEVYTWGDNDEGQLGDGTTNAIQRPRLVAALQGKKVNRVACGSAHTLAWST). An HECT domain is found at 4459 to 4796 (DSLLLPHRVW…IHFCKSIDTD (338 aa)). The active-site Glycyl thioester intermediate is the Cys-4764. Residues 4806 to 4836 (EPAADDSSEDSDNEDADSFASDSTQDYLTGH) form a disordered region. Acidic residues predominate over residues 4808–4822 (AADDSSEDSDNEDAD). 3 positions are modified to phosphoserine: Ser-4812, Ser-4813, and Ser-4816. Thr-4829 bears the Phosphothreonine mark.

Interacts (when phosphorylated at Thr-4829 and sumoylated) with RNF8 (via FHA domain); this interaction increases after ionising radiation (IR) treatment. Interacts with XPA. Interacts with NEURL4. Via its interaction with NEURL4, may indirectly interact with CCP110 and CEP97. Post-translationally, phosphorylation at Thr-4829 is required for interaction with RNF8. In terms of processing, sumoylated with SUMO1 by PIAS4 in response to double-strand breaks (DSBs), promoting the interaction with RNF8. As to expression, highest levels are found in brain and testis with lower levels in heart, lung, liver, skeletal muscle and kidney. Little expression detected in spleen.

Its subcellular location is the cytoplasm. The protein resides in the cytoskeleton. It localises to the microtubule organizing center. The protein localises to the centrosome. It is found in the centriole. Its subcellular location is the nucleus. The enzyme catalyses S-ubiquitinyl-[E2 ubiquitin-conjugating enzyme]-L-cysteine + [acceptor protein]-L-lysine = [E2 ubiquitin-conjugating enzyme]-L-cysteine + N(6)-ubiquitinyl-[acceptor protein]-L-lysine.. It functions in the pathway protein modification; protein ubiquitination. Its function is as follows. E3 ubiquitin-protein ligase that regulates ubiquitin-dependent retention of repair proteins on damaged chromosomes. Recruited to sites of DNA damage in response to ionizing radiation (IR) and facilitates the assembly of UBE2N and RNF8 promoting DNA damage-induced formation of 'Lys-63'-linked ubiquitin chains. Acts as a mediator of binding specificity between UBE2N and RNF8. Involved in the maintenance of RNF168 levels. E3 ubiquitin-protein ligase that promotes the ubiquitination and proteasomal degradation of XPA which influences the circadian oscillation of DNA excision repair activity. By controlling the steady-state expression of the IGF1R receptor, indirectly regulates the insulin-like growth factor receptor signaling pathway. Also modulates iron metabolism by regulating the basal turnover of FBXL5. The protein is E3 ubiquitin-protein ligase HERC2 of Mus musculus (Mouse).